The primary structure comprises 69 residues: MSKQCDVCGKKAQVGHHVSHSNIKTKRRFEPNLQSVRHQYPNGEVKTLSVCTRCLRSGAVVKPAVRKVA.

The protein belongs to the bacterial ribosomal protein bL28 family.

The sequence is that of Large ribosomal subunit protein bL28 from Nitratidesulfovibrio vulgaris (strain DSM 19637 / Miyazaki F) (Desulfovibrio vulgaris).